A 1023-amino-acid chain; its full sequence is FHIP family protein AGAP011705 (1023 aa).

Polar residues-rich tracts occupy residues 1–13 (MSWL…RQSF), 806–825 (SMTS…SSSY), and 868–888 (GLNH…ASMN). Disordered regions lie at residues 1-39 (MSWL…AGGG) and 797-927 (GKLL…AETQ). Positions 889–906 (VPSPVGQQQHQHQSVSSV) are enriched in low complexity.

It belongs to the FHIP family.

The polypeptide is FHIP family protein AGAP011705 (Anopheles gambiae (African malaria mosquito)).